The following is a 142-amino-acid chain: Large ribosomal subunit protein uL13 (142 aa).

This sequence belongs to the universal ribosomal protein uL13 family. Part of the 50S ribosomal subunit.

Functionally, this protein is one of the early assembly proteins of the 50S ribosomal subunit, although it is not seen to bind rRNA by itself. It is important during the early stages of 50S assembly. This is Large ribosomal subunit protein uL13 from Sodalis glossinidius (strain morsitans).